Reading from the N-terminus, the 223-residue chain is Class E basic helix-loop-helix protein 23 (223 aa).

The segment at 32–93 is disordered; the sequence is PETTRGFGAS…GVAVDARRRP (62 aa). The bHLH domain maps to 98–152; that stretch reads SLRLSINARERRRMHDLNDALDGLRAVIPYAHSPSVRKLSKIATLLLAKNYILMQ.

As to expression, expressed in brain and retina.

The protein resides in the nucleus. May function as transcriptional repressor. May modulate the expression of genes required for the differentiation and/or maintenance of pancreatic and neuronal cell types. May be important for rod bipolar cell maturation. This chain is Class E basic helix-loop-helix protein 23 (Bhlhe23), found in Mus musculus (Mouse).